An 866-amino-acid chain; its full sequence is DNA mismatch repair protein MutS (866 aa).

613–620 (GPNMGGKS) serves as a coordination point for ATP.

This sequence belongs to the DNA mismatch repair MutS family.

Functionally, this protein is involved in the repair of mismatches in DNA. It is possible that it carries out the mismatch recognition step. This protein has a weak ATPase activity. The chain is DNA mismatch repair protein MutS from Haemophilus ducreyi (strain 35000HP / ATCC 700724).